Here is a 294-residue protein sequence, read N- to C-terminus: Probable 2-(5''-triphosphoribosyl)-3'-dephosphocoenzyme-A synthase (294 aa).

Belongs to the CitG/MdcB family.

The catalysed reaction is 3'-dephospho-CoA + ATP = 2'-(5''-triphospho-alpha-D-ribosyl)-3'-dephospho-CoA + adenine. The polypeptide is Probable 2-(5''-triphosphoribosyl)-3'-dephosphocoenzyme-A synthase (Streptococcus equi subsp. zooepidemicus (strain MGCS10565)).